Reading from the N-terminus, the 272-residue chain is UPF0759 protein YecE (272 aa).

It belongs to the UPF0759 family.

This Escherichia coli O157:H7 protein is UPF0759 protein YecE (yecE).